We begin with the raw amino-acid sequence, 2068 residues long: uncharacterized protein (2068 aa).

2 helical membrane-spanning segments follow: residues 3–23 and 51–71; these read FFII…NFCS and TIYL…YYYI. A compositionally biased stretch (basic and acidic residues) spans 975 to 998; sequence QMHSGEDEKEELGEPKEKGSKSCQ. Residues 975–1030 form a disordered region; sequence QMHSGEDEKEELGEPKEKGSKSCQEEEEQDEEEEDEDEEEEEDQGVNNYDNYVDGV. Residues 999–1018 are compositionally biased toward acidic residues; sequence EEEEQDEEEEDEDEEEEEDQ. The chain crosses the membrane as a helical span at residues 1890-1910; sequence FLYNLSFIYNVYNYLILIYIY.

Its subcellular location is the membrane. This is an uncharacterized protein from Plasmodium falciparum (isolate 3D7).